We begin with the raw amino-acid sequence, 235 residues long: Large ribosomal subunit protein uL1 (235 aa).

This sequence belongs to the universal ribosomal protein uL1 family. Part of the 50S ribosomal subunit.

Functionally, binds directly to 23S rRNA. The L1 stalk is quite mobile in the ribosome, and is involved in E site tRNA release. Its function is as follows. Protein L1 is also a translational repressor protein, it controls the translation of the L11 operon by binding to its mRNA. This is Large ribosomal subunit protein uL1 from Symbiobacterium thermophilum (strain DSM 24528 / JCM 14929 / IAM 14863 / T).